Here is a 718-residue protein sequence, read N- to C-terminus: Tensin-4 (718 aa).

Positions 1–14 are cleaved as a signal peptide; it reads MSSSLLTGGHVVSL. Disordered stretches follow at residues 188 to 244 and 272 to 437; these read RETR…GLRA and LPHS…AKDM. Positions 192–207 are enriched in polar residues; it reads SSSNESLIFSGNQGRG. The span at 208–219 shows a compositional bias: low complexity; that stretch reads SSPHTPSSLSNS. Residue S230 is modified to Phosphoserine. Residues 272-304 show a composition bias toward low complexity; that stretch reads LPHSSLSSYPPSSRSLGSPASSSSSLHSLDRGS. 4 stretches are compositionally biased toward polar residues: residues 306–316, 337–349, 367–393, and 405–415; these read CVRSSDAQVPS, QASS…TNSM, PAQQ…QATK, and TSPSHLCQATK. In terms of domain architecture, SH2 spans 451–558; that stretch reads WFKPSITREQ…ALPCKLTIPQ (108 aa). One can recognise a PTB domain in the interval 585-711; that stretch reads CHTLYLTSVS…SQVISLVTAL (127 aa).

The protein belongs to the PTEN phosphatase protein family. As to quaternary structure, interacts (via SH2 domain) with Rho GTPase-activating protein DLC1 (via C-terminus); the interaction is independent of DLC1 tyrosine phosphorylation. Interacts with integrin ITGB1; the interaction displaces tensin TNS3 from the ITGB1 cytoplasmic tail and promotes ITGB1 stability. Interacts (via SH2 domain) with E3 ubiquitin-protein ligase CBL (phosphorylated on 'Tyr-781'); the interaction is enhanced in the presence of EGF and reduces interaction of CBL with EGFR. Interacts (via SH2 domain) with receptor tyrosine kinase MET (when phosphorylated); the interaction increases MET protein stability.

The protein localises to the cell junction. It localises to the focal adhesion. Its subcellular location is the cytoplasm. The protein resides in the cytoskeleton. In terms of biological role, promotes EGF-induced cell migration by displacing tensin TNS3 from the cytoplasmic tail of integrin ITGB1 which results in dissociation of TNS3 from focal adhesions, disassembly of actin stress fibers and initiation of cell migration. Suppresses ligand-induced degradation of EGFR by reducing EGFR ubiquitination in the presence of EGF. Increases MET protein stability by inhibiting MET endocytosis and subsequent lysosomal degradation which leads to increased cell survival, proliferation and migration. This is Tensin-4 (Tns4) from Rattus norvegicus (Rat).